A 55-amino-acid chain; its full sequence is Large ribosomal subunit protein bL33 (55 aa).

Belongs to the bacterial ribosomal protein bL33 family.

In Klebsiella pneumoniae (strain 342), this protein is Large ribosomal subunit protein bL33.